The chain runs to 575 residues: Methionine--tRNA ligase, mitochondrial (575 aa).

A 'HIGH' region motif is present at residues 20 to 32; sequence PIFYPNAKPHLGH. A 'KMSKS' region motif is present at residues 341–345; it reads KMSKS. Position 344 (K344) interacts with ATP.

It belongs to the class-I aminoacyl-tRNA synthetase family.

It localises to the mitochondrion matrix. The enzyme catalyses tRNA(Met) + L-methionine + ATP = L-methionyl-tRNA(Met) + AMP + diphosphate. In terms of biological role, catalyzes the attachment of methionine to tRNA(Met) in the mitochondrion. This Saccharomyces cerevisiae (strain ATCC 204508 / S288c) (Baker's yeast) protein is Methionine--tRNA ligase, mitochondrial (MSM1).